The chain runs to 581 residues: MYPEDSRVSGGVATVDFLEGTYDYAAPTPAPTPLYSHSTPGYYSAPLDAHGPPSDGSLQSLGSGPNSPLVFVPSSPHLSPFMHPPTHHYLETTSTPIYRSSVPSSQHSVSREDQCGTSDDSYSVGESGAGAGAAGFEMAKEMRFCAVCSDYASGYHYGVWSCEGCKAFFKRSIQGHNDYMCPATNQCTIDRNRRKSCQACRLRKCYEVGMMKGGVRKDRGRVLRRDKRRTGTSDRDKASKGLEHRTAPPQDRRKHISSSAGGGGGKSSVISMPPDQVLLLLRGAEPPMLCSRQKVNRPYTEVTVMTLLTSMADKELVHMIAWAKKLPGFLQLSLHDQVQLLESSWLEVLMIGLIWRSIHCPGKLIFAQDLILDRSEGDCVEGMAEIFDMLLATASRFRMLKLKPEEFVCLKAIILLNSGAFSFCTGTMEPLHDSAAVQNMLDTITDALIHHINQSGCSAQQQSRRQAQLLLLLSHIRHMSNKGMEHLYSMKCKNKVPLYDLLLEMLDAHRVHRPDRPAETWSQADREPLFTSRNSSSSSGGGGGGSSSAGSTSGPQVNLESPTGPGVLQLRVHPHPMKPTE.

The interval 1-144 (MYPEDSRVSG…GFEMAKEMRF (144 aa)) is modulating. 2 disordered regions span residues 45 to 66 (APLD…SGPN) and 99 to 123 (RSSV…DSYS). A compositionally biased stretch (polar residues) spans 56–66 (GSLQSLGSGPN). Residues 142–217 (MRFCAVCSDY…VGMMKGGVRK (76 aa)) constitute a DNA-binding region (nuclear receptor). 2 NR C4-type zinc fingers span residues 145-165 (CAVC…CEGC) and 181-200 (CPAT…CQAC). The interval 211-272 (MKGGVRKDRG…GGGKSSVISM (62 aa)) is hinge. Over residues 216 to 246 (RKDRGRVLRRDKRRTGTSDRDKASKGLEHRT) the composition is skewed to basic and acidic residues. Residues 216 to 269 (RKDRGRVLRRDKRRTGTSDRDKASKGLEHRTAPPQDRRKHISSSAGGGGGKSSV) are disordered. In terms of domain architecture, NR LBD spans 273-509 (PPDQVLLLLR…DLLLEMLDAH (237 aa)). Over residues 514 to 528 (PDRPAETWSQADREP) the composition is skewed to basic and acidic residues. The segment at 514–581 (PDRPAETWSQ…VHPHPMKPTE (68 aa)) is disordered. A compositionally biased stretch (basic residues) spans 572 to 581 (VHPHPMKPTE).

It belongs to the nuclear hormone receptor family. NR3 subfamily. As to quaternary structure, binds DNA as a homodimer. Can form a heterodimer with ER-beta.

Its subcellular location is the nucleus. Its function is as follows. The steroid hormones and their receptors are involved in the regulation of eukaryotic gene expression and affect cellular proliferation and differentiation in target tissues. This is Estrogen receptor (esr1) from Sparus aurata (Gilthead sea bream).